The sequence spans 138 residues: Lactoylglutathione lyase (138 aa).

Residues 2–126 (RLLHTMLRVG…DGYKIEFIQK (125 aa)) enclose the VOC domain. A Ni(2+)-binding site is contributed by His5. A substrate-binding site is contributed by Arg9. Position 56 (Glu56) interacts with Ni(2+). Substrate contacts are provided by Asn60 and His74. Positions 74 and 122 each coordinate Ni(2+). Glu122 functions as the Proton donor/acceptor in the catalytic mechanism.

It belongs to the glyoxalase I family. It depends on Ni(2+) as a cofactor.

The enzyme catalyses (R)-S-lactoylglutathione = methylglyoxal + glutathione. Its pathway is secondary metabolite metabolism; methylglyoxal degradation; (R)-lactate from methylglyoxal: step 1/2. Functionally, catalyzes the conversion of hemimercaptal, formed from methylglyoxal and glutathione, to S-lactoylglutathione. The sequence is that of Lactoylglutathione lyase (gloA) from Neisseria meningitidis serogroup A / serotype 4A (strain DSM 15465 / Z2491).